Reading from the N-terminus, the 229-residue chain is Biosynthetic peptidoglycan transglycosylase (229 aa).

Residues 10-30 (LLLALVLVVLYQFWIFMHILW) form a helical membrane-spanning segment.

It belongs to the glycosyltransferase 51 family.

The protein localises to the cell inner membrane. The catalysed reaction is [GlcNAc-(1-&gt;4)-Mur2Ac(oyl-L-Ala-gamma-D-Glu-L-Lys-D-Ala-D-Ala)](n)-di-trans,octa-cis-undecaprenyl diphosphate + beta-D-GlcNAc-(1-&gt;4)-Mur2Ac(oyl-L-Ala-gamma-D-Glu-L-Lys-D-Ala-D-Ala)-di-trans,octa-cis-undecaprenyl diphosphate = [GlcNAc-(1-&gt;4)-Mur2Ac(oyl-L-Ala-gamma-D-Glu-L-Lys-D-Ala-D-Ala)](n+1)-di-trans,octa-cis-undecaprenyl diphosphate + di-trans,octa-cis-undecaprenyl diphosphate + H(+). Its pathway is cell wall biogenesis; peptidoglycan biosynthesis. In terms of biological role, peptidoglycan polymerase that catalyzes glycan chain elongation from lipid-linked precursors. The sequence is that of Biosynthetic peptidoglycan transglycosylase from Methylobacillus flagellatus (strain ATCC 51484 / DSM 6875 / VKM B-1610 / KT).